Here is a 402-residue protein sequence, read N- to C-terminus: DNA replication and repair protein RecF (402 aa).

Glycine 30–threonine 37 is an ATP binding site.

This sequence belongs to the RecF family.

Its subcellular location is the cytoplasm. Functionally, the RecF protein is involved in DNA metabolism; it is required for DNA replication and normal SOS inducibility. RecF binds preferentially to single-stranded, linear DNA. It also seems to bind ATP. This is DNA replication and repair protein RecF from Pseudarthrobacter chlorophenolicus (strain ATCC 700700 / DSM 12829 / CIP 107037 / JCM 12360 / KCTC 9906 / NCIMB 13794 / A6) (Arthrobacter chlorophenolicus).